A 284-amino-acid chain; its full sequence is ATP synthase subunit beta, chloroplastic (284 aa).

The protein belongs to the ATPase alpha/beta chains family. F-type ATPases have 2 components, CF(1) - the catalytic core - and CF(0) - the membrane proton channel. CF(1) has five subunits: alpha(3), beta(3), gamma(1), delta(1), epsilon(1). CF(0) has four main subunits: a(1), b(1), b'(1) and c(9-12).

It is found in the plastid. The protein resides in the chloroplast thylakoid membrane. The catalysed reaction is ATP + H2O + 4 H(+)(in) = ADP + phosphate + 5 H(+)(out). Functionally, produces ATP from ADP in the presence of a proton gradient across the membrane. The catalytic sites are hosted primarily by the beta subunits. The polypeptide is ATP synthase subunit beta, chloroplastic (atpB) (Asplenium nidus (Bird's nest fern)).